Here is a 606-residue protein sequence, read N- to C-terminus: Electron transfer flavoprotein-ubiquinone oxidoreductase, mitochondrial (606 aa).

59-73 (VVIVGAGPSGLSTAI) contacts FAD. Residues 448–468 (PSLHWGTIPGLIYGALEMYIF) traverse the membrane as a helical segment. [4Fe-4S] cluster contacts are provided by Cys-551, Cys-575, Cys-578, and Cys-581.

The protein belongs to the ETF-QO/FixC family. Monomer. It depends on [4Fe-4S] cluster as a cofactor. FAD serves as cofactor.

It is found in the mitochondrion inner membrane. The catalysed reaction is a ubiquinone + reduced [electron-transfer flavoprotein] = a ubiquinol + oxidized [electron-transfer flavoprotein] + H(+). Its function is as follows. Accepts electrons from ETF and reduces ubiquinone. The chain is Electron transfer flavoprotein-ubiquinone oxidoreductase, mitochondrial (etfdh) from Dictyostelium discoideum (Social amoeba).